The sequence spans 476 residues: Cobyric acid synthase (476 aa).

Positions 242-428 (AFRVVVPVPP…LHGLFDTPDA (187 aa)) constitute a GATase cobBQ-type domain. Cys-323 (nucleophile) is an active-site residue. Residue His-420 is part of the active site.

This sequence belongs to the CobB/CobQ family. CobQ subfamily.

It functions in the pathway cofactor biosynthesis; adenosylcobalamin biosynthesis. In terms of biological role, catalyzes amidations at positions B, D, E, and G on adenosylcobyrinic A,C-diamide. NH(2) groups are provided by glutamine, and one molecule of ATP is hydrogenolyzed for each amidation. This Janthinobacterium sp. (strain Marseille) (Minibacterium massiliensis) protein is Cobyric acid synthase.